Consider the following 152-residue polypeptide: Transcriptional repressor NrdR (152 aa).

A zinc finger lies at 3 to 34; the sequence is CAFCGNPDTQVIDSRVSEDGSSIRRRRRCPAC. The 91-residue stretch at 49–139 folds into the ATP-cone domain; sequence PQVVKTAGHR…VYRSFQDISE (91 aa).

It belongs to the NrdR family. Zn(2+) is required as a cofactor.

Negatively regulates transcription of bacterial ribonucleotide reductase nrd genes and operons by binding to NrdR-boxes. This chain is Transcriptional repressor NrdR, found in Chromobacterium violaceum (strain ATCC 12472 / DSM 30191 / JCM 1249 / CCUG 213 / NBRC 12614 / NCIMB 9131 / NCTC 9757 / MK).